The chain runs to 365 residues: MEVCLPNGHQIVDLINNAFEGRVSIYSAQEGWDKTISAQPDMMVCGGAVVCMHCLGVVGSLQRKLKHLPHHRCNQQIRHQDYVDVQFADRVTAHWKRGMLSFVAQMHAMMNDVSPEDLDRVRTEGGSLVELNWLQVDPNSMFRSIHSSWTDPLQVVDDLDTKLDQYWTALNLMIDSSDLVPNFMMRDPSHAFNGVRLEGDARQTQFSRTFDSRSSLEWGVMVYDYSELEHDPSKGRAYRKELVTPARDFGHFGLSHYSRATTPILGKMPAVFSGMLTGNCKMYPFIKGTAKLKTVRKLVDSVNHAWGVEKIRYALGPGGMTGWYDRTMQQAPIVLTPAALTMFSDTTKFGDLDYPVMIGDPMILG.

A CCHC-type zinc finger spans residues 51–73 (CMHCLGVVGSLQRKLKHLPHHRC).

This sequence belongs to the orthoreovirus sigma-3 protein family. As to quaternary structure, heterohexamer of three sigma-3 and three Mu-1 proteins. The RNA-binding form is probably a homodimer. In terms of processing, cleaved during virus the endosomal proteolytic disassembly of the outer capsid.

The protein resides in the virion. In terms of biological role, stimulates translation by blocking the activation of the dsRNA-dependent protein kinase EIF2AK2/PKR, thereby inhibiting the host interferon response. Sigma3 prevents the activation of EIF2AK2 by competing with the kinase for dsRNA-binding. Functionally, the viral outer shell polypeptides, of which sigma-3 is one, impose structural constraints that prevent elongation of nascent transcripts by the RNA-dependent RNA polymerase lambda-3. This chain is Outer capsid protein sigma-3 (S4), found in Mammalia (T1L).